Consider the following 841-residue polypeptide: Rhomboid-like protease 5 (841 aa).

Positions 1–10 are enriched in low complexity; sequence MSSKGGSSRL. The tract at residues 1-289 is disordered; that stretch reads MSSKGGSSRL…GGDGGPRRHS (289 aa). Residues 11 to 51 are compositionally biased toward basic and acidic residues; sequence GSKDLKKMTSRTERELRDSGRVRGEVERVEKRLRATAKVKE. The segment covering 95 to 132 has biased composition (low complexity); the sequence is LRPASSSPRLASSSRPTESTLPSSSSRALQGASSSSSS. Composition is skewed to basic and acidic residues over residues 154 to 163, 209 to 230, and 243 to 275; these read LRQEKKRLPE, RTAE…RGSV, and SSHE…RSGD. Helical transmembrane passes span 323–343, 464–484, 492–512, 526–546, 571–590, and 673–693; these read FLMI…ELVL, MFRV…LLNV, WILE…VGGV, VTVG…PFSI, FGNM…GGLI, and FAAA…LLVP. Catalysis depends on serine 531, which acts as the Nucleophile. Histidine 585 is a catalytic residue.

The protein belongs to the peptidase S54 family.

Its subcellular location is the membrane. The enzyme catalyses Cleaves type-1 transmembrane domains using a catalytic dyad composed of serine and histidine that are contributed by different transmembrane domains.. Serine protease involved in intramembrane proteolysis. Cleaves microneme adhesins, such as MIC2. This step is essential for efficient invasion of host cells. Catalyzes intramembrane proteolysis of AMA1. This chain is Rhomboid-like protease 5 (ROM5), found in Toxoplasma gondii.